We begin with the raw amino-acid sequence, 386 residues long: Phosphoglycerate kinase (386 aa).

Residues 21–23, Arg-36, 59–62, Arg-112, and Arg-145 each bind substrate; these read DLN and HLGR. Residues Lys-196, Glu-313, and 339–342 each bind ATP; that span reads GGDT.

It belongs to the phosphoglycerate kinase family. In terms of assembly, monomer.

It is found in the cytoplasm. It carries out the reaction (2R)-3-phosphoglycerate + ATP = (2R)-3-phospho-glyceroyl phosphate + ADP. The protein operates within carbohydrate degradation; glycolysis; pyruvate from D-glyceraldehyde 3-phosphate: step 2/5. In Haemophilus influenzae (strain PittGG), this protein is Phosphoglycerate kinase.